We begin with the raw amino-acid sequence, 65 residues long: MLLFTFTFQALVLALIIFSFILVLTLPVIFASPKGWENNKSRIWLACRFWFFLVFLIGILDGIFL.

The next 2 helical transmembrane spans lie at 11–31 (LVLALIIFSFILVLTLPVIFA) and 44–64 (WLACRFWFFLVFLIGILDGIF).

It belongs to the PsbZ family. As to quaternary structure, PSII is composed of 1 copy each of membrane proteins PsbA, PsbB, PsbC, PsbD, PsbE, PsbF, PsbH, PsbI, PsbJ, PsbK, PsbL, PsbM, PsbT, PsbY, PsbZ, Psb30/Ycf12, at least 3 peripheral proteins of the oxygen-evolving complex and a large number of cofactors. It forms dimeric complexes.

The protein resides in the plastid. The protein localises to the chloroplast thylakoid membrane. In terms of biological role, may control the interaction of photosystem II (PSII) cores with the light-harvesting antenna, regulates electron flow through the 2 photosystem reaction centers. PSII is a light-driven water plastoquinone oxidoreductase, using light energy to abstract electrons from H(2)O, generating a proton gradient subsequently used for ATP formation. The polypeptide is Photosystem II reaction center protein Z (Euglena gracilis).